Here is a 234-residue protein sequence, read N- to C-terminus: MAVVSLSEMMEAGAHFGHQTRRWNPKMSKYIYCARNGVHIIDLVKTALCMNNAYKWTRNAAKSGKRFLFVGTKKQASDVVAQEATRCGAAYVNQRWLGGMLTNWTTMKARIERLKDLERMESSGSIAMRPKKEAAVLRRELERLQKYLGGLKGMRRLPDVVVLVDQRRESNAVLEARKLDISLVSMLDTNCDPDLCEVPIPCNDDAVRSVQLILGRLADAINEGRKGSNAERKN.

The protein belongs to the universal ribosomal protein uS2 family.

In Prochlorococcus marinus (strain AS9601), this protein is Small ribosomal subunit protein uS2.